The chain runs to 802 residues: Phenylalanine--tRNA ligase beta subunit (802 aa).

A tRNA-binding domain is found at 39–154 (AEGLSKLVVG…EDAVPGDSIF (116 aa)). The B5 domain maps to 407–482 (TEPVQVSTSL…RIYGYEKLPT (76 aa)). Residues Asp-460, Asp-466, Glu-469, and Glu-470 each contribute to the Mg(2+) site. Positions 709–802 (TKFPAVSRDI…LTEKVEAEVR (94 aa)) constitute an FDX-ACB domain.

It belongs to the phenylalanyl-tRNA synthetase beta subunit family. Type 1 subfamily. Tetramer of two alpha and two beta subunits. It depends on Mg(2+) as a cofactor.

Its subcellular location is the cytoplasm. It catalyses the reaction tRNA(Phe) + L-phenylalanine + ATP = L-phenylalanyl-tRNA(Phe) + AMP + diphosphate + H(+). The chain is Phenylalanine--tRNA ligase beta subunit from Streptococcus thermophilus (strain CNRZ 1066).